The chain runs to 181 residues: Oligoribonuclease (181 aa).

The region spanning 8 to 171 is the Exonuclease domain; the sequence is LIWIDLEMTG…QDIQESIAEL (164 aa). The active site involves Y129.

This sequence belongs to the oligoribonuclease family.

It is found in the cytoplasm. In terms of biological role, 3'-to-5' exoribonuclease specific for small oligoribonucleotides. This chain is Oligoribonuclease, found in Shewanella baltica (strain OS155 / ATCC BAA-1091).